Here is a 198-residue protein sequence, read N- to C-terminus: Molybdenum cofactor guanylyltransferase (198 aa).

GTP contacts are provided by residues 14-16, Lys-27, Asp-73, and Asp-103; that span reads LAG. Asp-103 contributes to the Mg(2+) binding site.

It belongs to the MobA family. As to quaternary structure, monomer. Requires Mg(2+) as cofactor.

It is found in the cytoplasm. The enzyme catalyses Mo-molybdopterin + GTP + H(+) = Mo-molybdopterin guanine dinucleotide + diphosphate. Functionally, transfers a GMP moiety from GTP to Mo-molybdopterin (Mo-MPT) cofactor (Moco or molybdenum cofactor) to form Mo-molybdopterin guanine dinucleotide (Mo-MGD) cofactor. In Pseudomonas aeruginosa (strain LESB58), this protein is Molybdenum cofactor guanylyltransferase.